Here is a 286-residue protein sequence, read N- to C-terminus: uncharacterized protein (286 aa).

In terms of domain architecture, Radical SAM core spans 2–221 (VDGMKHLILK…PIYIKNLQKR (220 aa)). [4Fe-4S] cluster is bound by residues Cys-16, Cys-20, and Cys-23.

The protein belongs to the radical SAM superfamily. Anaerobic sulfatase-maturating enzyme family. It depends on [4Fe-4S] cluster as a cofactor.

This is an uncharacterized protein from Methanocaldococcus jannaschii (strain ATCC 43067 / DSM 2661 / JAL-1 / JCM 10045 / NBRC 100440) (Methanococcus jannaschii).